We begin with the raw amino-acid sequence, 706 residues long: G2/M phase-specific E3 ubiquitin-protein ligase (706 aa).

Residues Asn-11 to Ile-51 form a C2HC pre-PHD-type zinc finger. A PHD-type 1 zinc finger spans residues Leu-79–Arg-128. The segment at Pro-143–Ser-193 adopts a PHD-type 2; degenerate zinc-finger fold. A PHD-type 3 zinc finger spans residues Arg-237–Arg-286. Positions Ile-371–Glu-698 constitute an HECT domain.

The protein resides in the nucleus. Its subcellular location is the nucleolus. It localises to the cytoplasm. It carries out the reaction S-ubiquitinyl-[E2 ubiquitin-conjugating enzyme]-L-cysteine + [acceptor protein]-L-lysine = [E2 ubiquitin-conjugating enzyme]-L-cysteine + N(6)-ubiquitinyl-[acceptor protein]-L-lysine.. The protein operates within protein modification; protein ubiquitination. In terms of biological role, E3 ubiquitin-protein ligase which accepts ubiquitin from an E2 ubiquitin-conjugating enzyme in the form of a thioester and then directly transfers the ubiquitin to targeted substrates. Essential in early embryonic development to prevent apoptotic death. In Macaca fascicularis (Crab-eating macaque), this protein is G2/M phase-specific E3 ubiquitin-protein ligase (G2E3).